Reading from the N-terminus, the 249-residue chain is Adapter protein MecA (249 aa).

Belongs to the MecA family. Homodimer.

Functionally, enables the recognition and targeting of unfolded and aggregated proteins to the ClpC protease or to other proteins involved in proteolysis. The chain is Adapter protein MecA from Streptococcus thermophilus (strain ATCC BAA-250 / LMG 18311).